The chain runs to 229 residues: MSNPLDRLERKLGYTFKDQDLMVLALTHRSYAGRNNERLEFLGDAILNFVIGEALFHHFPQAREGQLSRLRARLVKGETLALLARGFEVGDYLRLGSGELKSGGFRRESILADAMEALIGAIYLDTGMDSARERIIAWLGPQLRELTPVDTNKDPKTRLQEFLQSRGCDLPRYEVVDIQGEPHCRTFFVDCEVALLSDKTHGHGGSRRIAEQVAAAAALVALGVENGHD.

Positions 5–127 constitute an RNase III domain; the sequence is LDRLERKLGY…LIGAIYLDTG (123 aa). Mg(2+) is bound at residue Glu-40. Asp-44 is an active-site residue. Mg(2+) contacts are provided by Asp-113 and Glu-116. The active site involves Glu-116. The DRBM domain maps to 154 to 224; sequence DPKTRLQEFL…AAAALVALGV (71 aa).

This sequence belongs to the ribonuclease III family. In terms of assembly, homodimer. It depends on Mg(2+) as a cofactor.

The protein localises to the cytoplasm. It carries out the reaction Endonucleolytic cleavage to 5'-phosphomonoester.. Its function is as follows. Digests double-stranded RNA. Involved in the processing of primary rRNA transcript to yield the immediate precursors to the large and small rRNAs (23S and 16S). Processes some mRNAs, and tRNAs when they are encoded in the rRNA operon. Processes pre-crRNA and tracrRNA of type II CRISPR loci if present in the organism. This chain is Ribonuclease 3, found in Pseudomonas paraeruginosa (strain DSM 24068 / PA7) (Pseudomonas aeruginosa (strain PA7)).